The chain runs to 148 residues: Fluoride-specific ion channel FluC 2 (148 aa).

Helical transmembrane passes span 23 to 43, 61 to 81, 92 to 112, and 120 to 140; these read LGHL…RLAV, GTLA…TLIF, FWVL…LHTL, and LLGG…ALAG. 2 residues coordinate Na(+): G99 and T102.

The protein belongs to the fluoride channel Fluc/FEX (TC 1.A.43) family.

It is found in the cell membrane. The enzyme catalyses fluoride(in) = fluoride(out). With respect to regulation, na(+) is not transported, but it plays an essential structural role and its presence is essential for fluoride channel function. Functionally, fluoride-specific ion channel. Important for reducing fluoride concentration in the cell, thus reducing its toxicity. The protein is Fluoride-specific ion channel FluC 2 of Rubrobacter xylanophilus (strain DSM 9941 / JCM 11954 / NBRC 16129 / PRD-1).